Consider the following 205-residue polypeptide: GTP cyclohydrolase-2 (205 aa).

Residue 49–53 coordinates GTP; sequence RLHSE. Positions 54, 65, and 67 each coordinate Zn(2+). GTP is bound by residues Q70, 92-94, and T114; that span reads EGR. D126 functions as the Proton acceptor in the catalytic mechanism. The active-site Nucleophile is R128. The GTP site is built by T149 and K154.

It belongs to the GTP cyclohydrolase II family. It depends on Zn(2+) as a cofactor.

It carries out the reaction GTP + 4 H2O = 2,5-diamino-6-hydroxy-4-(5-phosphoribosylamino)-pyrimidine + formate + 2 phosphate + 3 H(+). It participates in cofactor biosynthesis; riboflavin biosynthesis; 5-amino-6-(D-ribitylamino)uracil from GTP: step 1/4. In terms of biological role, catalyzes the conversion of GTP to 2,5-diamino-6-ribosylamino-4(3H)-pyrimidinone 5'-phosphate (DARP), formate and pyrophosphate. In Pseudomonas aeruginosa (strain LESB58), this protein is GTP cyclohydrolase-2.